We begin with the raw amino-acid sequence, 122 residues long: Large ribosomal subunit protein uL18 (122 aa).

The protein belongs to the universal ribosomal protein uL18 family. As to quaternary structure, part of the 50S ribosomal subunit; part of the 5S rRNA/L5/L18/L25 subcomplex. Contacts the 5S and 23S rRNAs.

This is one of the proteins that bind and probably mediate the attachment of the 5S RNA into the large ribosomal subunit, where it forms part of the central protuberance. The sequence is that of Large ribosomal subunit protein uL18 from Dictyoglomus thermophilum (strain ATCC 35947 / DSM 3960 / H-6-12).